A 360-amino-acid polypeptide reads, in one-letter code: Dual-specificity RNA methyltransferase RlmN (360 aa).

Glu-91 serves as the catalytic Proton acceptor. Positions 110 to 343 (RSEKYTVCIS…CTIRESKGLD (234 aa)) constitute a Radical SAM core domain. Cys-117 and Cys-348 are disulfide-bonded. [4Fe-4S] cluster-binding residues include Cys-124, Cys-128, and Cys-131. S-adenosyl-L-methionine is bound by residues 174–175 (GE), Ser-206, 229–231 (SLH), and Asn-305. Catalysis depends on Cys-348, which acts as the S-methylcysteine intermediate.

This sequence belongs to the radical SAM superfamily. RlmN family. It depends on [4Fe-4S] cluster as a cofactor.

It is found in the cytoplasm. It catalyses the reaction adenosine(2503) in 23S rRNA + 2 reduced [2Fe-2S]-[ferredoxin] + 2 S-adenosyl-L-methionine = 2-methyladenosine(2503) in 23S rRNA + 5'-deoxyadenosine + L-methionine + 2 oxidized [2Fe-2S]-[ferredoxin] + S-adenosyl-L-homocysteine. The enzyme catalyses adenosine(37) in tRNA + 2 reduced [2Fe-2S]-[ferredoxin] + 2 S-adenosyl-L-methionine = 2-methyladenosine(37) in tRNA + 5'-deoxyadenosine + L-methionine + 2 oxidized [2Fe-2S]-[ferredoxin] + S-adenosyl-L-homocysteine. Functionally, specifically methylates position 2 of adenine 2503 in 23S rRNA and position 2 of adenine 37 in tRNAs. m2A2503 modification seems to play a crucial role in the proofreading step occurring at the peptidyl transferase center and thus would serve to optimize ribosomal fidelity. The protein is Dual-specificity RNA methyltransferase RlmN of Aliarcobacter butzleri (strain RM4018) (Arcobacter butzleri).